Consider the following 464-residue polypeptide: 3-isopropylmalate dehydratase large subunit (464 aa).

3 residues coordinate [4Fe-4S] cluster: Cys-337, Cys-397, and Cys-400.

This sequence belongs to the aconitase/IPM isomerase family. LeuC type 1 subfamily. Heterodimer of LeuC and LeuD. Requires [4Fe-4S] cluster as cofactor.

It catalyses the reaction (2R,3S)-3-isopropylmalate = (2S)-2-isopropylmalate. It participates in amino-acid biosynthesis; L-leucine biosynthesis; L-leucine from 3-methyl-2-oxobutanoate: step 2/4. Catalyzes the isomerization between 2-isopropylmalate and 3-isopropylmalate, via the formation of 2-isopropylmaleate. The sequence is that of 3-isopropylmalate dehydratase large subunit from Bacillus cereus (strain B4264).